The chain runs to 258 residues: Acetylglutamate kinase (258 aa).

Substrate contacts are provided by residues Gly-44–Gly-45, Arg-66, and Asn-158. ATP is bound by residues Asp-181–Leu-186 and Ile-209–Thr-211.

This sequence belongs to the acetylglutamate kinase family. ArgB subfamily. In terms of assembly, homodimer.

It is found in the cytoplasm. It catalyses the reaction N-acetyl-L-glutamate + ATP = N-acetyl-L-glutamyl 5-phosphate + ADP. Its pathway is amino-acid biosynthesis; L-arginine biosynthesis; N(2)-acetyl-L-ornithine from L-glutamate: step 2/4. Catalyzes the ATP-dependent phosphorylation of N-acetyl-L-glutamate. This is Acetylglutamate kinase from Citrobacter koseri (strain ATCC BAA-895 / CDC 4225-83 / SGSC4696).